The primary structure comprises 469 residues: Cyclin-dependent kinase 14 (469 aa).

Phosphoserine occurs at positions 24, 78, and 95. Positions 103–133 are disordered; the sequence is FKSSSAGKESPKVRRHSSPSSPTSPKFGKAD. Ser-134 is modified (phosphoserine). The Protein kinase domain maps to 135 to 419; that stretch reads YEKLEKLGEG…AQAALSHEYF (285 aa). ATP is bound by residues 141–149 and Lys-164; that span reads LGEGSYATV. Catalysis depends on Asp-256, which acts as the Proton acceptor. Residues 449 to 469 form a disordered region; sequence ESMRAFGKNNSYGKSLSNSKH. A compositionally biased stretch (polar residues) spans 456–469; that stretch reads KNNSYGKSLSNSKH.

This sequence belongs to the protein kinase superfamily. CMGC Ser/Thr protein kinase family. CDC2/CDKX subfamily. Found in a complex with LRP6, CCNY and CAPRIN2 during G2/M stage; CAPRIN2 functions as a scaffold for the complex by binding to CCNY via its N terminus and to CDK14 via its C terminus. Interacts with CCNY; CCNY mediates its recruitment to the plasma membrane and promotes phosphorylation of LRP6. Interacts with CCDN3 and CDKN1A. Interacts with SEPT8. Interacts with 14-3-3 proteina YWHAB, YWHAE, YWHAH and YWHAQ. In terms of tissue distribution, in the adult, widely expressed at low levels except in brain, kidney and testis where expression is high. In the brain, detected in cortex, hippocampus, dentate gyrus, amygdala cortex, parasubiculum and cerebellum. In the embryo, expressed predominantly in the nervous system.

It is found in the cell membrane. Its subcellular location is the cytoplasm. The protein resides in the nucleus. The catalysed reaction is L-seryl-[protein] + ATP = O-phospho-L-seryl-[protein] + ADP + H(+). It catalyses the reaction L-threonyl-[protein] + ATP = O-phospho-L-threonyl-[protein] + ADP + H(+). Its activity is regulated as follows. Serine/threonine-protein kinase activity is promoted by associated cyclins CCDN3 and CCNY and repressed by CDKN1A. Its function is as follows. Serine/threonine-protein kinase involved in the control of the eukaryotic cell cycle, whose activity is controlled by an associated cyclin. Acts as a cell-cycle regulator of Wnt signaling pathway during G2/M phase by mediating the phosphorylation of LRP6 at 'Ser-1490', leading to the activation of the Wnt signaling pathway. Acts as a regulator of cell cycle progression and cell proliferation via its interaction with CCDN3. Phosphorylates RB1 in vitro, however the relevance of such result remains to be confirmed in vivo. May also play a role in meiosis, neuron differentiation and may indirectly act as a negative regulator of insulin-responsive glucose transport. The sequence is that of Cyclin-dependent kinase 14 (Cdk14) from Mus musculus (Mouse).